Reading from the N-terminus, the 228-residue chain is ATP-dependent dethiobiotin synthetase BioD (228 aa).

Residue 12–17 (EIGKTT) participates in ATP binding. Thr-16 contacts Mg(2+). Lys-37 is a catalytic residue. Ser-41 is a substrate binding site. ATP contacts are provided by residues Asp-54, 116-119 (EGAG), and 205-207 (PRL). Mg(2+)-binding residues include Asp-54 and Glu-116.

The protein belongs to the dethiobiotin synthetase family. As to quaternary structure, homodimer. The cofactor is Mg(2+).

It is found in the cytoplasm. The enzyme catalyses (7R,8S)-7,8-diammoniononanoate + CO2 + ATP = (4R,5S)-dethiobiotin + ADP + phosphate + 3 H(+). Its pathway is cofactor biosynthesis; biotin biosynthesis; biotin from 7,8-diaminononanoate: step 1/2. Catalyzes a mechanistically unusual reaction, the ATP-dependent insertion of CO2 between the N7 and N8 nitrogen atoms of 7,8-diaminopelargonic acid (DAPA, also called 7,8-diammoniononanoate) to form a ureido ring. The chain is ATP-dependent dethiobiotin synthetase BioD from Pseudomonas aeruginosa (strain ATCC 15692 / DSM 22644 / CIP 104116 / JCM 14847 / LMG 12228 / 1C / PRS 101 / PAO1).